The chain runs to 821 residues: Zinc finger protein 41 (821 aa).

Positions 1–55 are disordered; sequence MAANGDSPPWSPALAAEGRGSSCEVRRERTPEARIHSVKRYPDLSPGPKGRSSAD. Residues 24–35 are compositionally biased toward basic and acidic residues; that stretch reads EVRRERTPEARI. One can recognise a KRAB domain in the interval 69 to 140; the sequence is VSFEDVTVDF…EGEAPHQSCS (72 aa). Residue K120 forms a Glycyl lysine isopeptide (Lys-Gly) (interchain with G-Cter in SUMO2) linkage. Residues 313–335 form a C2H2-type 1 zinc finger; sequence YVCTECVMGFTQKSHLFEHQRIH. Residues 341–364 form a C2H2-type 2; degenerate zinc finger; the sequence is RECDKSNKVFPQKPQVDVHPSVYT. C2H2-type zinc fingers lie at residues 369–391, 397–419, 425–447, 453–475, 481–503, 509–531, 537–559, 565–587, 593–615, and 621–643; these read YLCT…QKIH, YKCS…LRIH, YECS…QKTH, YECN…QRIH, YVCA…QRIH, YECS…QRIH, YICT…QKTH, YMCA…QKTH, YKCN…QKSH, and YECK…QRIH. Residue K647 forms a Glycyl lysine isopeptide (Lys-Gly) (interchain with G-Cter in SUMO2) linkage. C2H2-type zinc fingers lie at residues 649 to 671, 677 to 699, 705 to 727, 733 to 755, 761 to 783, and 789 to 811; these read YVCP…HRIH, YECS…QKIH, NICA…QKIH, YECG…QKSH, YECS…QIIH, and YACT…QKMH.

This sequence belongs to the krueppel C2H2-type zinc-finger protein family. Expressed in the heart, brain, placenta, lung, liver, skeletal muscle, kidney and pancreas.

It localises to the nucleus. Functionally, may be involved in transcriptional regulation. The protein is Zinc finger protein 41 (ZNF41) of Homo sapiens (Human).